Consider the following 364-residue polypeptide: Oxidized low-density lipoprotein receptor 1 (364 aa).

The interval 1 to 21 (MAFDDKMKPVNGQPDQKSCGK) is disordered. Over 1–31 (MAFDDKMKPVNGQPDQKSCGKKPKGLHLLSS) the chain is Cytoplasmic. The chain crosses the membrane as a helical; Signal-anchor for type II membrane protein span at residues 32-54 (TWWCPAAVTLAILCLVLSVTLIV). Residues cysteine 35 and cysteine 45 are each lipidated (S-palmitoyl cysteine). The neck stretch occupies residues 55-242 (QQTQLLQVSD…GPCPQDWIWH (188 aa)). Topologically, residues 55–364 (QQTQLLQVSD…QKKANLLLTQ (310 aa)) are extracellular. Asparagine 72, asparagine 92, and asparagine 138 each carry an N-linked (GlcNAc...) asparagine glycan. Residues 83–233 (QMSAQKKAEN…ALQRAANSSG (151 aa)) are a coiled coil. Tandem repeats lie at residues 96-141 (ESKR…NASE), 142-187 (ESKW…KYSE), and 188-233 (ESQR…NSSG). 3 disulfide bridges follow: cysteine 235/cysteine 246, cysteine 262/cysteine 354, and cysteine 333/cysteine 346. The region spanning 242-355 (HKENCYLFHG…CILTAFSICQ (114 aa)) is the C-type lectin domain.

In terms of assembly, homodimer; disulfide-linked. May form a hexamer composed of 3 homodimers. Interacts with HSP70. N-glycosylated. As to expression, predominantly expressed in lung and at lower level in kidney. Expressed in macrophages but not in vascular smooth muscle cells.

It localises to the cell membrane. Its subcellular location is the membrane raft. The protein localises to the secreted. Its function is as follows. Receptor that mediates the recognition, internalization and degradation of oxidatively modified low density lipoprotein (oxLDL) by vascular endothelial cells. OxLDL is a marker of atherosclerosis that induces vascular endothelial cell activation and dysfunction, resulting in pro-inflammatory responses, pro-oxidative conditions and apoptosis. Its association with oxLDL induces the activation of NF-kappa-B through an increased production of intracellular reactive oxygen and a variety of pro-atherogenic cellular responses including a reduction of nitric oxide (NO) release, monocyte adhesion and apoptosis. In addition to binding oxLDL, it acts as a receptor for the HSP70 protein involved in antigen cross-presentation to naive T-cells in dendritic cells, thereby participating in cell-mediated antigen cross-presentation. Also involved in inflammatory process, by acting as a leukocyte-adhesion molecule at the vascular interface in endotoxin-induced inflammation. Also acts as a receptor for advanced glycation end (AGE) products, activated platelets, monocytes, apoptotic cells and both Gram-negative and Gram-positive bacteria. The sequence is that of Oxidized low-density lipoprotein receptor 1 (Olr1) from Rattus norvegicus (Rat).